Reading from the N-terminus, the 344-residue chain is Succinylglutamate desuccinylase (344 aa).

Histidine 63, glutamate 66, and histidine 160 together coordinate Zn(2+). Residue glutamate 224 is part of the active site.

It belongs to the AspA/AstE family. Succinylglutamate desuccinylase subfamily. It depends on Zn(2+) as a cofactor.

The catalysed reaction is N-succinyl-L-glutamate + H2O = L-glutamate + succinate. The protein operates within amino-acid degradation; L-arginine degradation via AST pathway; L-glutamate and succinate from L-arginine: step 5/5. Transforms N(2)-succinylglutamate into succinate and glutamate. This chain is Succinylglutamate desuccinylase, found in Shewanella sp. (strain W3-18-1).